Consider the following 181-residue polypeptide: Inner membrane-spanning protein YciB (181 aa).

A run of 5 helical transmembrane segments spans residues 10 to 30, 50 to 70, 72 to 92, 118 to 138, and 148 to 168; these read LVIF…GALI, MHLI…VFHD, AFIK…LGVS, VTWY…YVAF, and FKVF…VFYL.

It belongs to the YciB family.

It localises to the cell inner membrane. Its function is as follows. Plays a role in cell envelope biogenesis, maintenance of cell envelope integrity and membrane homeostasis. In Shewanella oneidensis (strain ATCC 700550 / JCM 31522 / CIP 106686 / LMG 19005 / NCIMB 14063 / MR-1), this protein is Inner membrane-spanning protein YciB.